Here is a 149-residue protein sequence, read N- to C-terminus: Transcriptional repressor NrdR (149 aa).

The segment at 3–34 (CPFCSATDTKVIDSRLVADGHQVRRRRECTEC) is a zinc-finger region. One can recognise an ATP-cone domain in the interval 49 to 139 (PRVIKRDGTR…VYRAFEDVSQ (91 aa)).

This sequence belongs to the NrdR family. Zn(2+) serves as cofactor.

Negatively regulates transcription of bacterial ribonucleotide reductase nrd genes and operons by binding to NrdR-boxes. In Shewanella frigidimarina (strain NCIMB 400), this protein is Transcriptional repressor NrdR.